A 151-amino-acid chain; its full sequence is Large ribosomal subunit protein bL9 (151 aa).

The protein belongs to the bacterial ribosomal protein bL9 family.

Binds to the 23S rRNA. In Thermosipho melanesiensis (strain DSM 12029 / CIP 104789 / BI429), this protein is Large ribosomal subunit protein bL9.